The chain runs to 285 residues: MFNWVKTAMLMAAITALFIVIGGMIGGSRGMTIALLFALGMNFFSYWFSDKMVLRMYNAQEVDENTAPQFYRMVRELATRANLPMPRVYLINEDAPNAFATGRNPEHAAVAATTGILRVLSEREMRGVMAHELAHVKHRDILISTITATMAGAISALANFAMFFGGRDENGRPANPIAGIAVALLAPIAGALIQMAISRAREFEADRGGAQISGDPQSLATALDKIHRYAAGIPFQAAEAHPATAQMMIMNPLHGGGLQNLFSTHPATEERIARLMEMARTGRFD.

Helical transmembrane passes span 7–27 (TAML…MIGG) and 30–50 (GMTI…WFSD). His131 is a binding site for Zn(2+). Residue Glu132 is part of the active site. His135 is a Zn(2+) binding site. 2 helical membrane-spanning segments follow: residues 146–166 (ITAT…FFGG) and 177–197 (IAGI…QMAI). Glu202 is a binding site for Zn(2+).

Belongs to the peptidase M48B family. Zn(2+) is required as a cofactor.

The protein localises to the cell inner membrane. The protein is Protease HtpX homolog of Burkholderia cenocepacia (strain ATCC BAA-245 / DSM 16553 / LMG 16656 / NCTC 13227 / J2315 / CF5610) (Burkholderia cepacia (strain J2315)).